Consider the following 172-residue polypeptide: DNA-directed RNA polymerase II subunit RPB7 (172 aa).

The protein belongs to the eukaryotic RPB7/RPC8 RNA polymerase subunit family. As to quaternary structure, component of the RNA polymerase II (Pol II) complex consisting of 12 subunits. RPB4 and RPB7 form a subcomplex that protrudes from the 10-subunit Pol II core complex.

It is found in the nucleus. Its function is as follows. DNA-dependent RNA polymerase catalyzes the transcription of DNA into RNA using the four ribonucleoside triphosphates as substrates. Component of RNA polymerase II which synthesizes mRNA precursors and many functional non-coding RNAs. Pol II is the central component of the basal RNA polymerase II transcription machinery. It is composed of mobile elements that move relative to each other. RPB7 is part of a subcomplex with RPB4 that binds to a pocket formed by RPB1, RPB2 and RPB6 at the base of the clamp element. The RPB4-RPB7 subcomplex seems to lock the clamp via RPB7 in the closed conformation thus preventing double-stranded DNA to enter the active site cleft. The RPB4-RPB7 subcomplex binds single-stranded DNA and RNA. This is DNA-directed RNA polymerase II subunit RPB7 (polr2g) from Danio rerio (Zebrafish).